Reading from the N-terminus, the 282-residue chain is Protein NEOXANTHIN-DEFICIENT 1 (282 aa).

Required for neoxanthin biosynthesis. Probably not involved directly in the enzymatic conversion of violaxanthin to neoxanthin. Is necessary but not sufficient for neoxanthin synthesis. In Arabidopsis thaliana (Mouse-ear cress), this protein is Protein NEOXANTHIN-DEFICIENT 1.